We begin with the raw amino-acid sequence, 194 residues long: MKNIILASASERRQELLKRILEDFQIIVSDFDESSIPFKDNISSYVMNLAEGKARSVSKKIMDQDNNLVIGCDTLVAFNNKILGKPKDKKDAFEMLQALSGNEHEVYSGLAILDIKSNKIIKDFVCTKVKFSKLTSLQIEKYVNTGDPMDKAGAYGIQGKAGVFVENINGCYYNVVGLPLNKLNSMLMEMGVNL.

The active-site Proton acceptor is aspartate 73.

This sequence belongs to the Maf family. YhdE subfamily. A divalent metal cation is required as a cofactor.

The protein resides in the cytoplasm. It catalyses the reaction dTTP + H2O = dTMP + diphosphate + H(+). The enzyme catalyses UTP + H2O = UMP + diphosphate + H(+). In terms of biological role, nucleoside triphosphate pyrophosphatase that hydrolyzes dTTP and UTP. May have a dual role in cell division arrest and in preventing the incorporation of modified nucleotides into cellular nucleic acids. This chain is dTTP/UTP pyrophosphatase, found in Clostridium botulinum (strain Okra / Type B1).